The primary structure comprises 437 residues: tRNA pseudouridine synthase Pus10 (437 aa).

Residues 76-198 (VARDVVEHLS…GGGVDIQVNS (123 aa)) enclose the THUMP domain. The Nucleophile role is filled by aspartate 253. 2 residues coordinate substrate: tyrosine 321 and tyrosine 394.

It belongs to the pseudouridine synthase Pus10 family.

It catalyses the reaction uridine(54) in tRNA = pseudouridine(54) in tRNA. It carries out the reaction uridine(55) in tRNA = pseudouridine(55) in tRNA. In terms of biological role, responsible for synthesis of pseudouridine from uracil-54 and uracil-55 in the psi GC loop of transfer RNAs. This chain is tRNA pseudouridine synthase Pus10, found in Aeropyrum pernix (strain ATCC 700893 / DSM 11879 / JCM 9820 / NBRC 100138 / K1).